Here is a 148-residue protein sequence, read N- to C-terminus: Nucleoside diphosphate kinase B (148 aa).

ATP contacts are provided by Lys-9, Phe-57, Arg-85, Thr-91, Arg-102, and Asn-112. His-115 acts as the Pros-phosphohistidine intermediate in catalysis.

Belongs to the NDK family. The cofactor is Mg(2+).

The enzyme catalyses a 2'-deoxyribonucleoside 5'-diphosphate + ATP = a 2'-deoxyribonucleoside 5'-triphosphate + ADP. It carries out the reaction a ribonucleoside 5'-diphosphate + ATP = a ribonucleoside 5'-triphosphate + ADP. Major role in the synthesis of nucleoside triphosphates other than ATP. The ATP gamma phosphate is transferred to the NDP beta phosphate via a ping-pong mechanism, using a phosphorylated active-site intermediate. The chain is Nucleoside diphosphate kinase B from Flaveria bidentis (Coastal plain yellowtops).